A 271-amino-acid chain; its full sequence is Formamidopyrimidine-DNA glycosylase (271 aa).

The Schiff-base intermediate with DNA role is filled by P2. Residue E3 is the Proton donor of the active site. K56 (proton donor; for beta-elimination activity) is an active-site residue. Residues H89, R107, and R151 each coordinate DNA. An FPG-type zinc finger spans residues 236-270 (MVYARQGQPCRVCATPIKSLRQGQRSTFYCPHCQK). R260 functions as the Proton donor; for delta-elimination activity in the catalytic mechanism.

The protein belongs to the FPG family. In terms of assembly, monomer. Zn(2+) serves as cofactor.

It carries out the reaction Hydrolysis of DNA containing ring-opened 7-methylguanine residues, releasing 2,6-diamino-4-hydroxy-5-(N-methyl)formamidopyrimidine.. The enzyme catalyses 2'-deoxyribonucleotide-(2'-deoxyribose 5'-phosphate)-2'-deoxyribonucleotide-DNA = a 3'-end 2'-deoxyribonucleotide-(2,3-dehydro-2,3-deoxyribose 5'-phosphate)-DNA + a 5'-end 5'-phospho-2'-deoxyribonucleoside-DNA + H(+). Involved in base excision repair of DNA damaged by oxidation or by mutagenic agents. Acts as a DNA glycosylase that recognizes and removes damaged bases. Has a preference for oxidized purines, such as 7,8-dihydro-8-oxoguanine (8-oxoG). Has AP (apurinic/apyrimidinic) lyase activity and introduces nicks in the DNA strand. Cleaves the DNA backbone by beta-delta elimination to generate a single-strand break at the site of the removed base with both 3'- and 5'-phosphates. This is Formamidopyrimidine-DNA glycosylase from Albidiferax ferrireducens (strain ATCC BAA-621 / DSM 15236 / T118) (Rhodoferax ferrireducens).